The following is a 320-amino-acid chain: Ferrochelatase (320 aa).

2 residues coordinate Fe cation: histidine 194 and glutamate 275.

Belongs to the ferrochelatase family. In terms of assembly, monomer.

The protein resides in the cytoplasm. It carries out the reaction heme b + 2 H(+) = protoporphyrin IX + Fe(2+). It functions in the pathway porphyrin-containing compound metabolism; protoheme biosynthesis; protoheme from protoporphyrin-IX: step 1/1. In terms of biological role, catalyzes the ferrous insertion into protoporphyrin IX. This is Ferrochelatase from Escherichia coli O8 (strain IAI1).